A 292-amino-acid chain; its full sequence is Polyisoprenoid diphosphate/phosphate phosphohydrolase PLPP6 (292 aa).

2 disordered regions span residues 1-34 (MPSP…SGGG) and 66-86 (GSFP…PPED). The Cytoplasmic segment spans residues 1–131 (MPSPRRTIEG…SAWGSVRPLM (131 aa)). A compositionally biased stretch (low complexity) spans 10–25 (GRPLGSSGGSSVPGSP). S24 and S67 each carry phosphoserine. Residues 69–79 (PLAASGPAQAA) are compositionally biased toward low complexity. A helical transmembrane segment spans residues 132–152 (KLLEISGHGIPWLLGTLYCLL). Topologically, residues 153 to 161 (RSDSWAGRE) are lumenal. A helical membrane pass occupies residues 162–182 (VLMNLLFALLLDLLLVAVIKG). The segment at 181–189 (KGLVRRRRP) is phosphatase sequence motif I. The Cytoplasmic segment spans residues 183 to 225 (LVRRRRPAHNQKDMFFTLSVDRYSFPSGHATRAALVSRFILNH). A phosphatase sequence motif II region spans residues 208 to 211 (PSGH). The Proton donors role is filled by H211. A helical transmembrane segment spans residues 226–246 (LVLAIPLRVLVVLWAFVLGLS). Residues 246-257 (SRVMLGRHNVTD) are phosphatase sequence motif III. Over 247–257 (RVMLGRHNVTD) the chain is Lumenal. H253 functions as the Nucleophile in the catalytic mechanism. A helical transmembrane segment spans residues 258-278 (VAFGFFLGYMQYSIVDYCWLS). The Cytoplasmic portion of the chain corresponds to 279 to 292 (PHNVPVLFVLWNQQ).

Belongs to the PA-phosphatase related phosphoesterase family. Post-translationally, phosphorylation by PKC activates the phosphatase activity towards presqualene diphosphate.

It localises to the endoplasmic reticulum membrane. Its subcellular location is the nucleus envelope. The protein resides in the nucleus inner membrane. It catalyses the reaction presqualene diphosphate + H2O = presqualene phosphate + phosphate + H(+). The catalysed reaction is presqualene phosphate + H2O = presqualene alcohol + phosphate. The enzyme catalyses (2E,6E)-farnesyl diphosphate + H2O = (2E,6E)-farnesyl phosphate + phosphate + H(+). It carries out the reaction (2E,6E)-farnesyl phosphate + H2O = (2E,6E)-farnesol + phosphate. It catalyses the reaction (2E,6E,10E)-geranylgeranyl diphosphate + H2O = (2E,6E,10E)-geranylgeranyl phosphate + phosphate + H(+). The catalysed reaction is (2E,6E,10E)-geranylgeranyl phosphate + H2O = (2E,6E,10E)-geranylgeraniol + phosphate. The enzyme catalyses (2E)-geranyl diphosphate + H2O = (2E)-geranyl phosphate + phosphate + H(+). It carries out the reaction (2E)-geranyl phosphate + H2O = (2E)-geraniol + phosphate. It catalyses the reaction 1,2-dihexadecanoyl-sn-glycero-3-phosphate + H2O = 1,2-dihexadecanoyl-sn-glycerol + phosphate. Its function is as follows. Magnesium-independent polyisoprenoid diphosphatase that catalyzes the sequential dephosphorylation of presqualene, farnesyl, geranyl and geranylgeranyl diphosphates. Functions in the innate immune response through the dephosphorylation of presqualene diphosphate which acts as a potent inhibitor of the signaling pathways contributing to polymorphonuclear neutrophils activation. May regulate the biosynthesis of cholesterol and related sterols by dephosphorylating presqualene and farnesyl diphosphate, two key intermediates in this biosynthetic pathway. May also play a role in protein prenylation by acting on farnesyl diphosphate and its derivative geranylgeranyl diphosphate, two precursors for the addition of isoprenoid anchors to membrane proteins. Has a lower activity towards phosphatidic acid (PA), but through phosphatidic acid dephosphorylation may participate in the biosynthesis of phospholipids and triacylglycerols. May also act on ceramide-1-P, lysophosphatidic acid (LPA) and sphing-4-enine 1-phosphate/sphingosine-1-phosphate. This Mus musculus (Mouse) protein is Polyisoprenoid diphosphate/phosphate phosphohydrolase PLPP6.